The following is a 433-amino-acid chain: Glutamyl-tRNA reductase (433 aa).

Substrate is bound by residues 49–52, Ser-114, 119–121, and Gln-125; these read TCNR and EPQ. The active-site Nucleophile is Cys-50. 201 to 206 contacts NADP(+); it reads GAGETI.

It belongs to the glutamyl-tRNA reductase family. As to quaternary structure, homodimer.

The catalysed reaction is (S)-4-amino-5-oxopentanoate + tRNA(Glu) + NADP(+) = L-glutamyl-tRNA(Glu) + NADPH + H(+). The protein operates within porphyrin-containing compound metabolism; protoporphyrin-IX biosynthesis; 5-aminolevulinate from L-glutamyl-tRNA(Glu): step 1/2. Catalyzes the NADPH-dependent reduction of glutamyl-tRNA(Glu) to glutamate 1-semialdehyde (GSA). The polypeptide is Glutamyl-tRNA reductase (Histophilus somni (strain 129Pt) (Haemophilus somnus)).